The following is a 103-amino-acid chain: Acylphosphatase-2 (103 aa).

Position 2 is an N-acetylserine (Ser-2). The 91-residue stretch at 13–103 (SVDYEVFGRV…LDFSGFSTRY (91 aa)) folds into the Acylphosphatase-like domain. Residues Arg-28 and Asn-46 contribute to the active site.

This sequence belongs to the acylphosphatase family.

The catalysed reaction is an acyl phosphate + H2O = a carboxylate + phosphate + H(+). In terms of biological role, its physiological role is not yet clear. In Anas platyrhynchos (Mallard), this protein is Acylphosphatase-2 (ACYP2).